Here is a 1164-residue protein sequence, read N- to C-terminus: WASH complex subunit 5 (1164 aa).

Belongs to the strumpellin family. As to quaternary structure, probable component of the WASH complex.

The chain is WASH complex subunit 5 from Dictyostelium discoideum (Social amoeba).